The primary structure comprises 312 residues: Epoxyqueuosine reductase (312 aa).

Asp-132 acts as the Proton donor in catalysis. The 33-residue stretch at Glu-174–Ile-206 folds into the 4Fe-4S ferredoxin-type 1 domain. The [4Fe-4S] cluster site is built by Cys-186, Cys-189, Cys-192, Cys-196, Cys-212, Cys-240, Cys-243, and Cys-247. Residues Pro-226–Thr-257 enclose the 4Fe-4S ferredoxin-type 2 domain.

This sequence belongs to the QueG family. As to quaternary structure, monomer. Requires cob(II)alamin as cofactor. [4Fe-4S] cluster is required as a cofactor.

Its subcellular location is the cytoplasm. The enzyme catalyses epoxyqueuosine(34) in tRNA + AH2 = queuosine(34) in tRNA + A + H2O. The protein operates within tRNA modification; tRNA-queuosine biosynthesis. Catalyzes the conversion of epoxyqueuosine (oQ) to queuosine (Q), which is a hypermodified base found in the wobble positions of tRNA(Asp), tRNA(Asn), tRNA(His) and tRNA(Tyr). The sequence is that of Epoxyqueuosine reductase from Prochlorococcus marinus (strain NATL2A).